The chain runs to 981 residues: Rab3 GTPase-activating protein catalytic subunit (981 aa).

Residues serine 83, serine 379, serine 536, serine 579, serine 581, and serine 590 each carry the phosphoserine modification. Positions 532–558 (GKKTSLSDSTTSAYPGDAGKTGGQLGL) are disordered. The disordered stretch occupies residues 591–614 (DTEDLKGNGQESGKKGGPKEMANL). The residue at position 664 (serine 664) is a Phosphoserine.

The protein belongs to the Rab3-GAP catalytic subunit family. As to quaternary structure, the Rab3 GTPase-activating complex is a heterodimer composed of Rab3gap1 and Rab3gap2. The Rab3 GTPase-activating complex interacts with DMXL2. Interacts with LMAN1. As to expression, in the eye, it is highly expressed within the lens, particularly in the anterior lens epithelium and in a ring corresponding to the equatorial region where anterior cells are differentiating into lens fibers. Also highly expressed in the retina.

It is found in the cytoplasm. The protein resides in the endoplasmic reticulum. It localises to the golgi apparatus. The protein localises to the cis-Golgi network. Functionally, catalytic subunit of the Rab3 GTPase-activating (Rab3GAP) complex composed of RAB3GAP1 and RAB3GAP2, which has GTPase-activating protein (GAP) activity towards various Rab3 subfamily members (RAB3A, RAB3B, RAB3C and RAB3D), RAB5A and RAB43, and guanine nucleotide exchange factor (GEF) activity towards RAB18. As part of the Rab3GAP complex, acts as a GAP for Rab3 proteins by converting active RAB3-GTP to the inactive form RAB3-GDP. Rab3 proteins are involved in regulated exocytosis of neurotransmitters and hormones. The Rab3GAP complex, acts as a GEF for RAB18 by promoting the conversion of inactive RAB18-GDP to the active form RAB18-GTP. Recruits and stabilizes RAB18 at the cis-Golgi membrane where RAB18 is most likely activated. Also involved in RAB18 recruitment at the endoplasmic reticulum (ER) membrane where it maintains proper ER structure. Required for normal eye and brain development. May participate in neurodevelopmental processes such as proliferation, migration and differentiation before synapse formation, and non-synaptic vesicular release of neurotransmitters. This is Rab3 GTPase-activating protein catalytic subunit from Mus musculus (Mouse).